Here is a 462-residue protein sequence, read N- to C-terminus: Glycine--tRNA ligase (462 aa).

Substrate-binding residues include arginine 101 and glutamate 164. Residues 196–198 (RNE), 206–211 (FRTREF), 283–284 (EL), and 327–330 (GVDR) contribute to the ATP site. 211–215 (FEQME) lines the substrate pocket. 323-327 (EPSAG) provides a ligand contact to substrate.

The protein belongs to the class-II aminoacyl-tRNA synthetase family. In terms of assembly, homodimer.

The protein resides in the cytoplasm. It carries out the reaction tRNA(Gly) + glycine + ATP = glycyl-tRNA(Gly) + AMP + diphosphate. Catalyzes the attachment of glycine to tRNA(Gly). The chain is Glycine--tRNA ligase from Thermobifida fusca (strain YX).